A 260-amino-acid polypeptide reads, in one-letter code: Carbonic anhydrase 2 (260 aa).

Positions H3–F259 constitute an Alpha-carbonic anhydrase domain. H64 acts as the Proton donor/acceptor in catalysis. The Zn(2+) site is built by H94, H96, and H119. Substrate is bound at residue T198–T199.

This sequence belongs to the alpha-carbonic anhydrase family. The cofactor is Zn(2+).

It localises to the cytoplasm. It carries out the reaction hydrogencarbonate + H(+) = CO2 + H2O. Catalyzes the reversible hydration of carbon dioxide. The chain is Carbonic anhydrase 2 (ca2) from Pseudaspius hakonensis (Big-scaled redfin).